Here is a 62-residue protein sequence, read N- to C-terminus: Large ribosomal subunit protein bL28 (62 aa).

The protein belongs to the bacterial ribosomal protein bL28 family.

In Thermobifida fusca (strain YX), this protein is Large ribosomal subunit protein bL28.